Reading from the N-terminus, the 324-residue chain is IDS-like terpene synthase 2 (324 aa).

2 residues coordinate Mg(2+): aspartate 77 and aspartate 81.

It belongs to the FPP/GGPP synthase family. The cofactor is Mg(2+).

The enzyme catalyses (2E)-geranyl diphosphate = (E)-beta-ocimene + diphosphate. It catalyses the reaction (2E,6E)-farnesyl diphosphate = (3E,6E)-alpha-farnesene + diphosphate. It carries out the reaction (2E,6E,10E)-geranylgeranyl diphosphate = (E,E,E)-alpha-springene + diphosphate. In terms of biological role, terpene synthase that shows monoterpene synthase activity and produces (E)-beta-ocimene as a major product, using geranyl diphosphate (GPP) as substrate. Also shows sesquiterpene synthase activity as it is able to convert farnesyl diphosphate (FPP) into (E,E)-alpha-farnesene. Finally, TPS2 can convert geranylgeranyl diphosphate into (E,E,E)-alpha-springene. The polypeptide is IDS-like terpene synthase 2 (Melampsora lini (Rust fungus)).